Reading from the N-terminus, the 281-residue chain is 16S rRNA (guanine(1405)-N(7))-methyltransferase (281 aa).

S-adenosyl-L-methionine-binding positions include Tyr60, 105–107, Arg111, Gly136, Asp160, 186–187, Phe203, and Gln212; these read HTS and QG.

Belongs to the methyltransferase superfamily. Aminoglycoside resistance family.

The catalysed reaction is guanosine(1405) in 16S rRNA + S-adenosyl-L-methionine = N(7)-methylguanosine(1405) in 16S rRNA + S-adenosyl-L-homocysteine. In terms of biological role, specifically methylates the N(7) position of guanine 1405 in 16S rRNA. Confers resistance to various aminoglycosides, including gentamicin and kanamycin. In Proteus mirabilis, this protein is 16S rRNA (guanine(1405)-N(7))-methyltransferase (rmtC).